A 188-amino-acid chain; its full sequence is ATP-dependent protease subunit HslV (188 aa).

Residue Thr7 is part of the active site. Gly162, Cys165, and Ser168 together coordinate Na(+).

Belongs to the peptidase T1B family. HslV subfamily. In terms of assembly, a double ring-shaped homohexamer of HslV is capped on each side by a ring-shaped HslU homohexamer. The assembly of the HslU/HslV complex is dependent on binding of ATP.

The protein resides in the cytoplasm. The catalysed reaction is ATP-dependent cleavage of peptide bonds with broad specificity.. Its activity is regulated as follows. Allosterically activated by HslU binding. Protease subunit of a proteasome-like degradation complex believed to be a general protein degrading machinery. The protein is ATP-dependent protease subunit HslV of Thiobacillus denitrificans (strain ATCC 25259 / T1).